We begin with the raw amino-acid sequence, 313 residues long: ADP-L-glycero-D-manno-heptose-6-epimerase (313 aa).

Residues 10-11, 31-32, lysine 38, arginine 53, 75-79, and asparagine 92 each bind NADP(+); these read MI, DN, and EGACS. Tyrosine 139 (proton acceptor) is an active-site residue. Lysine 143 provides a ligand contact to NADP(+). Asparagine 174 lines the substrate pocket. Residues valine 175 and lysine 183 each contribute to the NADP(+) site. The Proton acceptor role is filled by lysine 183. Substrate-binding positions include serine 185, histidine 192, 206–209, arginine 214, and tyrosine 277; that span reads FAGS.

Belongs to the NAD(P)-dependent epimerase/dehydratase family. HldD subfamily. As to quaternary structure, homopentamer. NADP(+) is required as a cofactor.

It catalyses the reaction ADP-D-glycero-beta-D-manno-heptose = ADP-L-glycero-beta-D-manno-heptose. Its pathway is nucleotide-sugar biosynthesis; ADP-L-glycero-beta-D-manno-heptose biosynthesis; ADP-L-glycero-beta-D-manno-heptose from D-glycero-beta-D-manno-heptose 7-phosphate: step 4/4. Catalyzes the interconversion between ADP-D-glycero-beta-D-manno-heptose and ADP-L-glycero-beta-D-manno-heptose via an epimerization at carbon 6 of the heptose. The polypeptide is ADP-L-glycero-D-manno-heptose-6-epimerase (Vibrio campbellii (strain ATCC BAA-1116)).